The following is a 1177-amino-acid chain: DNA-directed RNA polymerase subunit beta (1177 aa).

The tract at residues 1–36 (MEGCILADSRQSKTAASPSPSRPQSSSNNSVPGAPN) is disordered. Over residues 17–32 (SPSPSRPQSSSNNSVP) the composition is skewed to low complexity.

The protein belongs to the RNA polymerase beta chain family. The RNAP catalytic core consists of 2 alpha, 1 beta, 1 beta' and 1 omega subunit. When a sigma factor is associated with the core the holoenzyme is formed, which can initiate transcription.

It catalyses the reaction RNA(n) + a ribonucleoside 5'-triphosphate = RNA(n+1) + diphosphate. Functionally, DNA-dependent RNA polymerase catalyzes the transcription of DNA into RNA using the four ribonucleoside triphosphates as substrates. This Mycobacterium tuberculosis (strain ATCC 25177 / H37Ra) protein is DNA-directed RNA polymerase subunit beta.